The following is a 392-amino-acid chain: Glyceraldehyde-3-phosphate dehydrogenase A, chloroplastic (392 aa).

Residues 1–56 constitute a chloroplast transit peptide; that stretch reads NSSLQVSNKGFSEFSGLRTSSAIPFGRKTNDDLLSVVAFQTSVIGGGNSKRGVVEA. NADP(+)-binding positions include 67–68, Asp-91, and Arg-136; that span reads RI. D-glyceraldehyde 3-phosphate contacts are provided by residues 208-210, Thr-239, Arg-254, 267-268, and Arg-290; these read SCT and TG. Cys-209 serves as the catalytic Nucleophile. Asn-372 contributes to the NADP(+) binding site.

This sequence belongs to the glyceraldehyde-3-phosphate dehydrogenase family. Tetramer of either four A chains (GAPDH 2) or two A and two B chains (GAPDH 1).

It localises to the plastid. Its subcellular location is the chloroplast. It catalyses the reaction D-glyceraldehyde 3-phosphate + phosphate + NADP(+) = (2R)-3-phospho-glyceroyl phosphate + NADPH + H(+). It participates in carbohydrate biosynthesis; Calvin cycle. The polypeptide is Glyceraldehyde-3-phosphate dehydrogenase A, chloroplastic (GAPA) (Nicotiana tabacum (Common tobacco)).